The chain runs to 151 residues: Ribosome-binding factor A (151 aa).

Residues 120-151 (RSPKVVRDLDDTSSDDTSPDANTDTDKETDAE) are disordered.

The protein belongs to the RbfA family. In terms of assembly, monomer. Binds 30S ribosomal subunits, but not 50S ribosomal subunits or 70S ribosomes.

The protein localises to the cytoplasm. One of several proteins that assist in the late maturation steps of the functional core of the 30S ribosomal subunit. Associates with free 30S ribosomal subunits (but not with 30S subunits that are part of 70S ribosomes or polysomes). Required for efficient processing of 16S rRNA. May interact with the 5'-terminal helix region of 16S rRNA. This chain is Ribosome-binding factor A, found in Xanthobacter autotrophicus (strain ATCC BAA-1158 / Py2).